A 314-amino-acid polypeptide reads, in one-letter code: Serine protease 46 (314 aa).

A Peptidase S1 domain is found at 44–281 (VVNGKVVEVG…FTQWIKRQIG (238 aa)). Residues Cys69 and Cys85 are joined by a disulfide bond. Residues His84 and Asp130 each act as charge relay system in the active site. Cystine bridges form between Cys164–Cys239, Cys197–Cys219, and Cys229–Cys257. Residue Ser233 is the Charge relay system of the active site. The helical transmembrane segment at 293-313 (FLSPFILTGYILLVSLGSLWL) threads the bilayer.

The protein belongs to the peptidase S1 family.

The protein resides in the membrane. This Rattus norvegicus (Rat) protein is Serine protease 46 (Prss46).